Consider the following 139-residue polypeptide: Putative nickel-responsive regulator (139 aa).

Residues His79, His90, His92, and Cys98 each coordinate Ni(2+).

It belongs to the transcriptional regulatory CopG/NikR family. Ni(2+) serves as cofactor.

In terms of biological role, transcriptional regulator. This Trichlorobacter lovleyi (strain ATCC BAA-1151 / DSM 17278 / SZ) (Geobacter lovleyi) protein is Putative nickel-responsive regulator.